Consider the following 249-residue polypeptide: Small ribosomal subunit protein uS2 (249 aa).

The protein belongs to the universal ribosomal protein uS2 family.

This is Small ribosomal subunit protein uS2 from Listeria monocytogenes serovar 1/2a (strain ATCC BAA-679 / EGD-e).